The sequence spans 502 residues: Mannitol 2-dehydrogenase (502 aa).

NAD(+) is bound at residue 37–48 (IVHVGVGGFHRA).

This sequence belongs to the mannitol dehydrogenase family. Monomer.

It carries out the reaction D-mannitol + NAD(+) = D-fructose + NADH + H(+). Functionally, catalyzes the NAD(H)-dependent interconversion of D-fructose and D-mannitol in the mannitol metabolic pathway. This is Mannitol 2-dehydrogenase from Aspergillus terreus (strain NIH 2624 / FGSC A1156).